Here is a 316-residue protein sequence, read N- to C-terminus: Acetaldehyde dehydrogenase (316 aa).

11 to 14 (SGNI) contacts NAD(+). The Acyl-thioester intermediate role is filled by cysteine 131. NAD(+) is bound by residues 162–170 (SAGPGTRAN) and asparagine 289.

Belongs to the acetaldehyde dehydrogenase family. Interacts with MhpE.

The enzyme catalyses acetaldehyde + NAD(+) + CoA = acetyl-CoA + NADH + H(+). The protein operates within aromatic compound metabolism; 3-phenylpropanoate degradation. Catalyzes the conversion of acetaldehyde to acetyl-CoA, using NAD(+) and coenzyme A. Is the final enzyme in the meta-cleavage pathway for the degradation of aromatic compounds. This is Acetaldehyde dehydrogenase from Escherichia coli O7:K1 (strain IAI39 / ExPEC).